Reading from the N-terminus, the 207-residue chain is Glutathione S-transferase P (207 aa).

Residues 1-78 (PPYTITYFPV…HLGRSFGLYG (78 aa)) enclose the GST N-terminal domain. Y3 carries the post-translational modification Phosphotyrosine; by EGFR. Residues Y7, R13, W38, K42, and 49–50 (QL) contribute to the glutathione site. Residue T59 is modified to Phosphothreonine. 62 to 63 (QS) serves as a coordination point for glutathione. In terms of domain architecture, GST C-terminal spans 80–201 (DQKEAALVDM…ASPEHVNRPI (122 aa)). Residues K100 and K113 each carry the N6-succinyllysine modification. N6-acetyllysine is present on K125.

Belongs to the GST superfamily. Pi family. Homodimer. Interacts with CDK5.

The protein resides in the cytoplasm. The protein localises to the mitochondrion. Its subcellular location is the nucleus. The catalysed reaction is RX + glutathione = an S-substituted glutathione + a halide anion + H(+). The enzyme catalyses prostaglandin J2 + glutathione = prostaglandin J2-S-(R)-glutathione. It catalyses the reaction prostaglandin J2 + glutathione = prostaglandin J2-S-(S)-glutathione. It carries out the reaction prostaglandin A2 + glutathione = prostaglandin A2-S-(S)-glutathione. The catalysed reaction is 11(S)-hydroxy-14(S),15(S)-epoxy-(5Z,8Z,12E)-eicosatrienoate + glutathione = (11S,15S)-dihydroxy-14(R)-S-glutathionyl-(5Z,8Z,12E)-eicosatrienoate. Its function is as follows. Conjugation of reduced glutathione to a wide number of exogenous and endogenous hydrophobic electrophiles. Involved in the formation of glutathione conjugates of both prostaglandin A2 (PGA2) and prostaglandin J2 (PGJ2). Participates in the formation of novel hepoxilin regioisomers. Negatively regulates CDK5 activity via p25/p35 translocation to prevent neurodegeneration. The chain is Glutathione S-transferase P (GSTP1) from Sus scrofa (Pig).